A 280-amino-acid polypeptide reads, in one-letter code: 30 kDa immediate-early protein 2 (280 aa).

The segment at 36 to 164 (SEEEQGEEVE…KKSKRISELD (129 aa)) is disordered. Composition is skewed to low complexity over residues 47-67 (RGAT…TSPT), 90-101 (SSSSSSCSSASD), and 132-147 (AASS…SSGG).

Functionally, activates the E1.7 promoter. This activation is augmented by the IE1 protein. It down-regulates the transcription of genes under the control of the major IE promoter. This is 30 kDa immediate-early protein 2 (UL122) from Human cytomegalovirus (strain Towne) (HHV-5).